We begin with the raw amino-acid sequence, 441 residues long: MKHYPHYLDLKPAMHAKGVVRLPGSKSISNRTLLLAALAQGTTHIRDLLASDDTHVMLMALQKLGVKWEQIGESQDYIVHGVDGSFPVHQADLFMGNAGTAIRPLTAALAVTGGDYTLHGVSRMHERPIGDLVDALNAIGTHIEYTGEPGYPPLHIQRGRIHAHEMSVRGNVSSQFLTALLMAAPLMTREQDVIINVIGDLISKPYIEITLNLIQRFGVEVQRNGWQSFTIKAGQRYISPGNIHVEGDASSASYFLAAGAIAGGPVRVEGVGRDSIQGDVRFVEALEQMGATVRMGDNWIEAESNGVLRAIDADFNHIPDAAMTIAVAALYADGPSILRNIGSWRVKETDRISAMATELRKLGAIVEEGEDYLKVTPPAEILSAAIDTYDDHRMAMCFSLATLDGAARRGNKERINDPQCVAKTFPEYFEAFAKVTEESLF.

3-phosphoshikimate-binding residues include K26, S27, and R31. Position 26 (K26) interacts with phosphoenolpyruvate. Positions 99 and 127 each coordinate phosphoenolpyruvate. Residues S173, S174, Q175, S203, D320, and K347 each contribute to the 3-phosphoshikimate site. Q175 contributes to the phosphoenolpyruvate binding site. D320 functions as the Proton acceptor in the catalytic mechanism. Residues R351, R393, and K423 each contribute to the phosphoenolpyruvate site.

It belongs to the EPSP synthase family. Monomer.

The protein localises to the cytoplasm. The enzyme catalyses 3-phosphoshikimate + phosphoenolpyruvate = 5-O-(1-carboxyvinyl)-3-phosphoshikimate + phosphate. The protein operates within metabolic intermediate biosynthesis; chorismate biosynthesis; chorismate from D-erythrose 4-phosphate and phosphoenolpyruvate: step 6/7. In terms of biological role, catalyzes the transfer of the enolpyruvyl moiety of phosphoenolpyruvate (PEP) to the 5-hydroxyl of shikimate-3-phosphate (S3P) to produce enolpyruvyl shikimate-3-phosphate and inorganic phosphate. The protein is 3-phosphoshikimate 1-carboxyvinyltransferase of Janthinobacterium sp. (strain Marseille) (Minibacterium massiliensis).